A 124-amino-acid polypeptide reads, in one-letter code: Small ribosomal subunit protein uS12 (124 aa).

Residues 1-28 are disordered; sequence MPTISQLVGSERKRLTKKTKSPALKSCP. Position 89 is a 3-methylthioaspartic acid (Asp-89). Positions 104 to 124 are disordered; sequence TAGVKDRRQSRSKYGAKAPKD.

Belongs to the universal ribosomal protein uS12 family. As to quaternary structure, part of the 30S ribosomal subunit. Contacts proteins S8 and S17. May interact with IF1 in the 30S initiation complex.

Functionally, with S4 and S5 plays an important role in translational accuracy. Its function is as follows. Interacts with and stabilizes bases of the 16S rRNA that are involved in tRNA selection in the A site and with the mRNA backbone. Located at the interface of the 30S and 50S subunits, it traverses the body of the 30S subunit contacting proteins on the other side and probably holding the rRNA structure together. The combined cluster of proteins S8, S12 and S17 appears to hold together the shoulder and platform of the 30S subunit. The protein is Small ribosomal subunit protein uS12 of Prochlorococcus marinus (strain MIT 9301).